Here is a 554-residue protein sequence, read N- to C-terminus: ATP synthase subunit alpha (554 aa).

173 to 180 provides a ligand contact to ATP; sequence GDRQTGKT. Residues 531 to 554 are disordered; it reads SHLAAEKVRKHVPPSKPTTQRTAG.

The protein belongs to the ATPase alpha/beta chains family. F-type ATPases have 2 components, CF(1) - the catalytic core - and CF(0) - the membrane proton channel. CF(1) has five subunits: alpha(3), beta(3), gamma(1), delta(1), epsilon(1). CF(0) has three main subunits: a(1), b(2) and c(9-12). The alpha and beta chains form an alternating ring which encloses part of the gamma chain. CF(1) is attached to CF(0) by a central stalk formed by the gamma and epsilon chains, while a peripheral stalk is formed by the delta and b chains.

It localises to the cell membrane. The catalysed reaction is ATP + H2O + 4 H(+)(in) = ADP + phosphate + 5 H(+)(out). Functionally, produces ATP from ADP in the presence of a proton gradient across the membrane. The alpha chain is a regulatory subunit. This chain is ATP synthase subunit alpha, found in Acidothermus cellulolyticus (strain ATCC 43068 / DSM 8971 / 11B).